The chain runs to 262 residues: MSGDLSPIDKAKFVAAKRAAELVEDGMRVGLGTGSTAAWLVRCLGEMVREDGLKITGVPTSARTAELAREVGIELITLDEARWLDLTIDGADEFDSELNLIKGGGGALLQEKIVATASDQMVVIADKAKEVETLGAFPLPIEVIPFGWQTSQALVEETLISMDVMGRSSTLRMNGASPYVTDEGNHILDLHLNRIGNPRQLALVLNQIPGVVENGLFIDICDTVVIGYGDGKVEVRDINEGTIETDRIDFVETDNLFADLND.

Substrate-binding positions include 33 to 36, 89 to 92, and 102 to 105; these read TGST, DGAD, and KGGG. E111 serves as the catalytic Proton acceptor. K129 is a binding site for substrate.

It belongs to the ribose 5-phosphate isomerase family. In terms of assembly, homodimer.

It catalyses the reaction aldehydo-D-ribose 5-phosphate = D-ribulose 5-phosphate. It participates in carbohydrate degradation; pentose phosphate pathway; D-ribose 5-phosphate from D-ribulose 5-phosphate (non-oxidative stage): step 1/1. Catalyzes the reversible conversion of ribose-5-phosphate to ribulose 5-phosphate. This is Ribose-5-phosphate isomerase A from Ruegeria sp. (strain TM1040) (Silicibacter sp.).